The following is a 335-amino-acid chain: Cathepsin B (335 aa).

Residues 1-17 (MWRLLATLSCLVLLTSA) form the signal peptide. Residues 18-79 (RESLHFQPLS…QRAAFAADMI (62 aa)) constitute a propeptide, activation peptide. 6 cysteine pairs are disulfide-bonded: cysteine 93–cysteine 122, cysteine 105–cysteine 150, cysteine 141–cysteine 207, cysteine 142–cysteine 146, cysteine 179–cysteine 211, and cysteine 187–cysteine 198. Residue cysteine 108 is part of the active site. Asparagine 192 carries N-linked (GlcNAc...) asparagine glycosylation. Residue lysine 220 is modified to N6-acetyllysine. The cysteines at positions 227 and 331 are disulfide-linked. Active-site residues include histidine 278 and asparagine 298. A propeptide spanning residues 333–335 (PHF) is cleaved from the precursor.

Belongs to the peptidase C1 family. As to quaternary structure, dimer of a heavy chain and a light chain cross-linked by a disulfide bond. Interacts with SRPX2. Directly interacts with SHKBP1. In terms of tissue distribution, expressed in heart (at protein level).

It is found in the lysosome. Its subcellular location is the melanosome. The protein resides in the secreted. It localises to the extracellular space. The protein localises to the apical cell membrane. It catalyses the reaction Hydrolysis of proteins with broad specificity for peptide bonds. Preferentially cleaves -Arg-Arg-|-Xaa bonds in small molecule substrates (thus differing from cathepsin L). In addition to being an endopeptidase, shows peptidyl-dipeptidase activity, liberating C-terminal dipeptides.. Its function is as follows. Thiol protease which is believed to participate in intracellular degradation and turnover of proteins. Cleaves matrix extracellular phosphoglycoprotein MEPE. Involved in the solubilization of cross-linked TG/thyroglobulin in the thyroid follicle lumen. Has also been implicated in tumor invasion and metastasis. This Sus scrofa (Pig) protein is Cathepsin B (CTSB).